The following is a 976-amino-acid chain: MAKDLNDSGFPPKRKPLLRPQRSDFTANSSTTMNVNANTRGRGRQKQEGGKGSSRSPSLHSPKSWIRSASATGILGLRRPELAHSHSHAPSTGTPAGGNRSPLRRSTANATPVETGRSLTDGDINNVVDVLPSFEMYNTLHRHIPQGNVDPDRHDFPPSYQEANNSTATGAAGSSADLSHQSLSTDALGATRSSSTSNLENLIPLRTEHHSIAAHQSTAVDEDSLDIPPILDDLNDTDNIFIDKLYTLPKMSTPIEITIKTTKHAPIPHVKPEEESILKEYTSGDLIHGFITIENKSQANLKFEMFYVTLESYISIIDKVKSKRTIKRFLRMVDLSASWSYSKIALGSGVDFIPADVDYDGSVFGLNNSRVLEPGVKYKKFFIFKLPLQLLDVTCKQEHFSHCLLPPSFGIDKYRNNCKYSGIKVNRVLGCGHLGTKGSPILTNDMSDDNLSINYTIDARIVGKDQKASKLYIMKEREYNLRVIPFGFDANVVGERTTMSQLNDITKLVQERLDALRKIFQRLEKKEPITNRDIHGADLSGTIDDSIESDSQEILQRKLDQLHIKNRNNYLVNYNDLKLGHDLDNGRSGNSGHNTDTSRAWGPFVESELKYKLKNKSNSSSFLNFSHFLNSSSSSMSSSSNAGKNNHDLTGNKERTGLILVKAKIPKQGLPYWAPSLLRKTNVFESKSKHDQENWVRLSELIPEDVKKPLEKLDLQLTCIESDNSLPHDPPEIQSITTELICITAKSDNSIPIKLNSELLMNKEKLTSIKALYDDFHSKICEYETKFNKNFLELNELYNMNRGDRRPKELKFTDFITSQLFNDIESICNLKVSVHNLSNIFKKQVSTLKQHSKHALSEDSISHTGNGSSSSPSSASLTPVTSSSKSSLFLPSGSSSTSLKFTDQIVHKWVRIAPLQYKRDINVNLEFNKDIKETLIPSFESCLCCRFYCVRVMIKFENHLGVAKIDIPISVRQVTK.

The disordered stretch occupies residues 1 to 65 (MAKDLNDSGF…SPSLHSPKSW (65 aa)). The span at 23 to 39 (SDFTANSSTTMNVNANT) shows a compositional bias: polar residues. The span at 53 to 64 (SSRSPSLHSPKS) shows a compositional bias: low complexity. 2 positions are modified to phosphoserine: S58 and S70. Disordered stretches follow at residues 82–124 (LAHS…DGDI), 145–196 (PQGN…SSST), and 857–878 (SEDS…ASLT). Positions 156-160 (FPPSY) match the PY-motif motif. The span at 163 to 176 (ANNSTATGAAGSSA) shows a compositional bias: low complexity. The span at 177–196 (DLSHQSLSTDALGATRSSST) shows a compositional bias: polar residues. Positions 862–878 (SHTGNGSSSSPSSASLT) are enriched in low complexity.

The protein belongs to the BUL1 family. As to quaternary structure, component of the RSP5-BUL1/2 ubiquitin ligase complex composed of at least RSP5 and BUL1 or BUL2.

It is found in the cytoplasm. Its pathway is protein modification; protein ubiquitination. Functionally, component of a RSP5 ubiquitin ligase complex which specifies polyubiquitination and intracellular trafficking of the general amino acid permease GAP1 as well as other permeases such as PMA1. The RSP5-BUL1/2 complex is also necessary for the heat-shock element (HSE)-mediated gene expression, nitrogen starvation GLN3-dependent transcription and pressure-induced differential regulation of the 2 tryptophan permeases TAT1 and TAT2. This chain is Ubiquitin ligase-binding protein BUL1 (BUL1), found in Saccharomyces cerevisiae (strain ATCC 204508 / S288c) (Baker's yeast).